We begin with the raw amino-acid sequence, 243 residues long: Thaumatin-like protein 1 (243 aa).

An N-terminal signal peptide occupies residues Met1–Ser22. 8 cysteine pairs are disulfide-bonded: Cys31-Cys242, Cys79-Cys88, Cys93-Cys100, Cys148-Cys231, Cys153-Cys214, Cys161-Cys177, Cys181-Cys190, and Cys191-Cys201.

Belongs to the thaumatin family.

It localises to the secreted. It is found in the extracellular space. Its subcellular location is the apoplast. Functionally, possesses antifungal activity. This Castanea sativa (Sweet chestnut) protein is Thaumatin-like protein 1 (TL1).